A 102-amino-acid polypeptide reads, in one-letter code: ATP-dependent Clp protease adapter protein ClpS (102 aa).

This sequence belongs to the ClpS family. Binds to the N-terminal domain of the chaperone ClpA.

Functionally, involved in the modulation of the specificity of the ClpAP-mediated ATP-dependent protein degradation. This is ATP-dependent Clp protease adapter protein ClpS from Shewanella sp. (strain ANA-3).